Consider the following 267-residue polypeptide: 2-keto-3-deoxy-L-rhamnonate aldolase (267 aa).

The active-site Proton acceptor is histidine 49. Glutamine 151 contacts substrate. Glutamate 153 contacts Mg(2+). Substrate contacts are provided by alanine 178 and aspartate 179. A Mg(2+)-binding site is contributed by aspartate 179.

It belongs to the HpcH/HpaI aldolase family. KDR aldolase subfamily. Homohexamer. Mg(2+) serves as cofactor.

It catalyses the reaction 2-dehydro-3-deoxy-L-rhamnonate = (S)-lactaldehyde + pyruvate. Functionally, catalyzes the reversible retro-aldol cleavage of 2-keto-3-deoxy-L-rhamnonate (KDR) to pyruvate and lactaldehyde. The protein is 2-keto-3-deoxy-L-rhamnonate aldolase of Salmonella dublin (strain CT_02021853).